The sequence spans 162 residues: NADH-quinone oxidoreductase subunit I (162 aa).

4Fe-4S ferredoxin-type domains lie at 53 to 83 (LRRYPNGEERCIACKLCEAVCPAMAITIESE) and 93 to 122 (TRYDIDLTKCIFCGFCEESCPVDSIVETHI). [4Fe-4S] cluster is bound by residues cysteine 63, cysteine 66, cysteine 69, cysteine 73, cysteine 102, cysteine 105, cysteine 108, and cysteine 112.

This sequence belongs to the complex I 23 kDa subunit family. In terms of assembly, NDH-1 is composed of 14 different subunits. Subunits NuoA, H, J, K, L, M, N constitute the membrane sector of the complex. Requires [4Fe-4S] cluster as cofactor.

The protein resides in the cell inner membrane. It catalyses the reaction a quinone + NADH + 5 H(+)(in) = a quinol + NAD(+) + 4 H(+)(out). NDH-1 shuttles electrons from NADH, via FMN and iron-sulfur (Fe-S) centers, to quinones in the respiratory chain. The immediate electron acceptor for the enzyme in this species is believed to be ubiquinone. Couples the redox reaction to proton translocation (for every two electrons transferred, four hydrogen ions are translocated across the cytoplasmic membrane), and thus conserves the redox energy in a proton gradient. This chain is NADH-quinone oxidoreductase subunit I, found in Herminiimonas arsenicoxydans.